The chain runs to 160 residues: MAVTKKPDLSDPVLRAKLAKGMGHNYYGEPAWPNDLLYIFPVVIFGTFACVIGLSVLDPAAIGEPANPFATPLEILPEWYFYPVFQILRVVPNKLLGVLLMAAVPAGLLTVPFIENINKFQNPFRRPVATTVFLIGTVAAIWLGIGAALPIDISLTLGLF.

3 helical membrane-spanning segments follow: residues Leu-36 to Val-56, Leu-95 to Glu-115, and Thr-131 to Ile-151.

This sequence belongs to the cytochrome b family. PetD subfamily. The 4 large subunits of the cytochrome b6-f complex are cytochrome b6, subunit IV (17 kDa polypeptide, petD), cytochrome f and the Rieske protein, while the 4 small subunits are petG, petL, petM and petN. The complex functions as a dimer.

It is found in the plastid. The protein localises to the chloroplast thylakoid membrane. In terms of biological role, component of the cytochrome b6-f complex, which mediates electron transfer between photosystem II (PSII) and photosystem I (PSI), cyclic electron flow around PSI, and state transitions. In Chlorella vulgaris (Green alga), this protein is Cytochrome b6-f complex subunit 4.